A 1177-amino-acid chain; its full sequence is uncharacterized protein (1177 aa).

A signal peptide spans 1 to 26 (MKKLLKKSKFWWFLLCGLSVSTILVA). Cysteine 27 carries the N-palmitoyl cysteine lipid modification. Cysteine 27 carries the S-diacylglycerol cysteine lipid modification.

The protein belongs to the MG307/MG309/MG338 family.

It is found in the cell membrane. This is an uncharacterized protein from Mycoplasma genitalium (strain ATCC 33530 / DSM 19775 / NCTC 10195 / G37) (Mycoplasmoides genitalium).